Here is a 339-residue protein sequence, read N- to C-terminus: DNA-directed RNA polymerase subunit alpha (339 aa).

Positions methionine 1 to glutamate 233 are alpha N-terminal domain (alpha-NTD). The tract at residues lysine 264 to phenylalanine 339 is alpha C-terminal domain (alpha-CTD).

Belongs to the RNA polymerase alpha chain family. As to quaternary structure, in plastids the minimal PEP RNA polymerase catalytic core is composed of four subunits: alpha, beta, beta', and beta''. When a (nuclear-encoded) sigma factor is associated with the core the holoenzyme is formed, which can initiate transcription.

It is found in the plastid. It localises to the chloroplast. The enzyme catalyses RNA(n) + a ribonucleoside 5'-triphosphate = RNA(n+1) + diphosphate. DNA-dependent RNA polymerase catalyzes the transcription of DNA into RNA using the four ribonucleoside triphosphates as substrates. The protein is DNA-directed RNA polymerase subunit alpha of Thinopyrum elongatum (Tall wheatgrass).